Reading from the N-terminus, the 424-residue chain is Hemagglutinin-esterase (424 aa).

The first 16 residues, 1 to 16 (MFLLPRFVLVSCIIGS), serve as a signal peptide directing secretion. The esterase domain 1 stretch occupies residues 7 to 127 (FVLVSCIIGS…SNDIWMQNKG (121 aa)). Over 17–392 (LGFDNPPTNV…PICVYDPLPI (376 aa)) the chain is Virion surface. S40 acts as the Nucleophile in catalysis. A disulfide bridge connects residues C44 and C65. N-linked (GlcNAc...) asparagine; by host glycans are attached at residues N54, N89, N153, N236, and N301. Disulfide bonds link C113–C162, C197–C276, and C205–C249. A receptor binding region spans residues 128-266 (LFYTQVYKNM…GNYLAISNEL (139 aa)). Residues 267–379 (LLTVPTKAIC…RCPTAADINT (113 aa)) are esterase domain 2. Cysteines 307 and 312 form a disulfide. N316 is a glycosylation site (N-linked (GlcNAc...) asparagine; by host). Residues D326 and H329 each act as charge relay system in the active site. C347 and C371 are disulfide-bonded. N358 is a glycosylation site (N-linked (GlcNAc...) asparagine; by host). Residues 393–413 (ILLGILLSVAVIIIVVLLLYF) traverse the membrane as a helical segment. The Intravirion segment spans residues 414-424 (MVDNGTRLHDA). A glycan (N-linked (GlcNAc...) asparagine; by host) is linked at N417.

It belongs to the influenza type C/coronaviruses hemagglutinin-esterase family. As to quaternary structure, homodimer; disulfide-linked. Forms a complex with the M protein in the pre-Golgi. Associates then with S-M complex to form a ternary complex S-M-HE. Post-translationally, N-glycosylated in the host RER.

The protein resides in the virion membrane. Its subcellular location is the host cell membrane. The enzyme catalyses N-acetyl-9-O-acetylneuraminate + H2O = N-acetylneuraminate + acetate + H(+). It catalyses the reaction N-acetyl-4-O-acetylneuraminate + H2O = N-acetylneuraminate + acetate + H(+). Structural protein that makes short spikes at the surface of the virus. Contains receptor binding and receptor-destroying activities. Mediates de-O-acetylation of N-acetyl-4-O-acetylneuraminic acid, which is probably the receptor determinant recognized by the virus on the surface of erythrocytes and susceptible cells. This receptor-destroying activity is important for virus release as it probably helps preventing self-aggregation and ensures the efficient spread of the progeny virus from cell to cell. May serve as a secondary viral attachment protein for initiating infection, the spike protein being the major one. May become a target for both the humoral and the cellular branches of the immune system. This chain is Hemagglutinin-esterase, found in Bos taurus (Bovine).